Reading from the N-terminus, the 725-residue chain is IML2-like protein YKR018C (725 aa).

Phosphothreonine is present on Thr196. Ser246, Ser377, and Ser380 each carry phosphoserine.

This sequence belongs to the IML2 family.

It is found in the cytoplasm. The protein localises to the nucleus. The polypeptide is IML2-like protein YKR018C (Saccharomyces cerevisiae (strain ATCC 204508 / S288c) (Baker's yeast)).